The sequence spans 200 residues: NADH-quinone oxidoreductase subunit B (200 aa).

4 residues coordinate [4Fe-4S] cluster: C79, C80, C144, and C174.

It belongs to the complex I 20 kDa subunit family. As to quaternary structure, NDH-1 is composed of 14 different subunits. Subunits NuoB, C, D, E, F, and G constitute the peripheral sector of the complex. It depends on [4Fe-4S] cluster as a cofactor.

Its subcellular location is the cell inner membrane. It carries out the reaction a quinone + NADH + 5 H(+)(in) = a quinol + NAD(+) + 4 H(+)(out). Its function is as follows. NDH-1 shuttles electrons from NADH, via FMN and iron-sulfur (Fe-S) centers, to quinones in the respiratory chain. The immediate electron acceptor for the enzyme in this species is believed to be ubiquinone. Couples the redox reaction to proton translocation (for every two electrons transferred, four hydrogen ions are translocated across the cytoplasmic membrane), and thus conserves the redox energy in a proton gradient. In Caulobacter vibrioides (strain NA1000 / CB15N) (Caulobacter crescentus), this protein is NADH-quinone oxidoreductase subunit B.